The sequence spans 149 residues: Oocyte-expressed protein homolog (149 aa).

The tract at residues 1–23 (MVDDAGTAESQRGKQTPADSLEQ) is disordered. Positions 8-18 (AESQRGKQTPA) are enriched in polar residues. One can recognise a KH; atypical domain in the interval 49 to 110 (PLVFYLEAWL…SVQNRVKSML (62 aa)).

Belongs to the KHDC1 family. Component of the subcortical maternal complex (SCMC), at least composed of NLRP5, KHDC3, OOEP, and TLE6. Within the complex, interacts with NLRP5, KHDC3 and TLE6. As part of the SCMC interacts with the SCMC-associated protein NLRP4F. The SCMC may facilitate translocation of its components between the nuclear and cytoplasmic compartments. Forms a scaffold complex with KHDC3/FILIA, and interacts with BLM and TRIM25 at DNA replication forks.

The protein localises to the cytoplasm. Its subcellular location is the nucleus. Component of the subcortical maternal complex (SCMC), a multiprotein complex that plays a key role in early embryonic development. The SCMC complex is a structural constituent of cytoplasmic lattices, which consist in fibrous structures found in the cytoplasm of oocytes and preimplantation embryos. They are required to store maternal proteins critical for embryonic development, such as proteins that control epigenetic reprogramming of the preimplantation embryo, and prevent their degradation or activation. As part of the OOEP-KHDC3 scaffold, recruits BLM and TRIM25 to DNA replication forks, thereby promoting the ubiquitination of BLM by TRIM25, enhancing BLM retainment at replication forks and therefore promoting stalled replication fork restart. Positively regulates the homologous recombination-mediated DNA double-strand break (DSB) repair pathway by regulating ATM activation and RAD51 recruitment to DSBs in oocytes. Thereby contributes to oocyte survival and the resumption and completion of meiosis. The protein is Oocyte-expressed protein homolog (OOEP) of Papio anubis (Olive baboon).